The following is a 247-amino-acid chain: Segregation and condensation protein A (247 aa).

It belongs to the ScpA family. In terms of assembly, component of a cohesin-like complex composed of ScpA, ScpB and the Smc homodimer, in which ScpA and ScpB bind to the head domain of Smc. The presence of the three proteins is required for the association of the complex with DNA.

Its subcellular location is the cytoplasm. In terms of biological role, participates in chromosomal partition during cell division. May act via the formation of a condensin-like complex containing Smc and ScpB that pull DNA away from mid-cell into both cell halves. The protein is Segregation and condensation protein A of Bacillus cereus (strain G9842).